Consider the following 459-residue polypeptide: Argininosuccinate lyase (459 aa).

Residues 440–459 (DEKKLEELRQNENRDNVYNP) are disordered.

It belongs to the lyase 1 family. Argininosuccinate lyase subfamily.

It is found in the cytoplasm. The enzyme catalyses 2-(N(omega)-L-arginino)succinate = fumarate + L-arginine. It functions in the pathway amino-acid biosynthesis; L-arginine biosynthesis; L-arginine from L-ornithine and carbamoyl phosphate: step 3/3. The protein is Argininosuccinate lyase of Pyrococcus furiosus (strain ATCC 43587 / DSM 3638 / JCM 8422 / Vc1).